The primary structure comprises 680 residues: DNA ligase (680 aa).

NAD(+)-binding positions include 35 to 39, 86 to 87, and E111; these read DADFD and SL. The active-site N6-AMP-lysine intermediate is the K113. The NAD(+) site is built by R134, E174, K290, and K314. 4 residues coordinate Zn(2+): C408, C411, C427, and C433. In terms of domain architecture, BRCT spans 597-680; it reads VAEQTLEGLT…RLLNTGSADE (84 aa).

The protein belongs to the NAD-dependent DNA ligase family. LigA subfamily. Mg(2+) is required as a cofactor. Mn(2+) serves as cofactor.

It catalyses the reaction NAD(+) + (deoxyribonucleotide)n-3'-hydroxyl + 5'-phospho-(deoxyribonucleotide)m = (deoxyribonucleotide)n+m + AMP + beta-nicotinamide D-nucleotide.. DNA ligase that catalyzes the formation of phosphodiester linkages between 5'-phosphoryl and 3'-hydroxyl groups in double-stranded DNA using NAD as a coenzyme and as the energy source for the reaction. It is essential for DNA replication and repair of damaged DNA. This is DNA ligase from Corynebacterium glutamicum (strain ATCC 13032 / DSM 20300 / JCM 1318 / BCRC 11384 / CCUG 27702 / LMG 3730 / NBRC 12168 / NCIMB 10025 / NRRL B-2784 / 534).